The chain runs to 363 residues: Strychnine O-methyltransferase (363 aa).

The S-adenosyl-L-methionine site is built by Gly-204, Asp-227, Asp-249, Met-250, and Lys-263. The active-site Proton acceptor is His-267.

Belongs to the class I-like SAM-binding methyltransferase superfamily. Cation-independent O-methyltransferase family.

It carries out the reaction 10-hydroxystrychnine + S-adenosyl-L-methionine = beta-colubrine + S-adenosyl-L-homocysteine + H(+). The enzyme catalyses 11-demethylbrucine + S-adenosyl-L-methionine = brucine + S-adenosyl-L-homocysteine + H(+). It participates in alkaloid biosynthesis. Its function is as follows. O-methyltransferase involved in the biosynthesis of curare monoterpene indole alkaloids (MIAs), natural products such as strychnine, a neurotoxic compound used as a pesticide to control rodents, and its pharmacologically active derivatives, including brucine, used to regulate blood pressure. Curare alkaloids act as animal glycine receptor antagonists. Catalyzes the conversion of 10-OH strychnine to beta-colubrine, and of 11-deMe brucine to brucine. This is Strychnine O-methyltransferase from Strychnos nux-vomica (Poison nut).